Reading from the N-terminus, the 151-residue chain is Aspartate carbamoyltransferase regulatory chain (151 aa).

Positions 108, 113, 138, and 141 each coordinate Zn(2+).

The protein belongs to the PyrI family. Contains catalytic and regulatory chains. Requires Zn(2+) as cofactor.

Functionally, involved in allosteric regulation of aspartate carbamoyltransferase. This chain is Aspartate carbamoyltransferase regulatory chain, found in Pyrobaculum arsenaticum (strain DSM 13514 / JCM 11321 / PZ6).